The sequence spans 95 residues: DNA-directed RNA polymerase subunit Rpo11 (95 aa).

This sequence belongs to the archaeal Rpo11/eukaryotic RPB11/RPC19 RNA polymerase subunit family. As to quaternary structure, part of the RNA polymerase complex.

It localises to the cytoplasm. It carries out the reaction RNA(n) + a ribonucleoside 5'-triphosphate = RNA(n+1) + diphosphate. Functionally, DNA-dependent RNA polymerase (RNAP) catalyzes the transcription of DNA into RNA using the four ribonucleoside triphosphates as substrates. In Pyrococcus furiosus (strain ATCC 43587 / DSM 3638 / JCM 8422 / Vc1), this protein is DNA-directed RNA polymerase subunit Rpo11.